The following is a 164-amino-acid chain: CDP-archaeol synthase (164 aa).

4 helical membrane passes run 3-23 (LLYF…AVLA), 51-71 (YEGF…PNLL), 77-97 (LLDA…GAFI), and 122-142 (LAVY…AVII).

This sequence belongs to the CDP-archaeol synthase family. Mg(2+) is required as a cofactor.

It localises to the cell membrane. The enzyme catalyses 2,3-bis-O-(geranylgeranyl)-sn-glycerol 1-phosphate + CTP + H(+) = CDP-2,3-bis-O-(geranylgeranyl)-sn-glycerol + diphosphate. It functions in the pathway membrane lipid metabolism; glycerophospholipid metabolism. In terms of biological role, catalyzes the formation of CDP-2,3-bis-(O-geranylgeranyl)-sn-glycerol (CDP-archaeol) from 2,3-bis-(O-geranylgeranyl)-sn-glycerol 1-phosphate (DGGGP) and CTP. This reaction is the third ether-bond-formation step in the biosynthesis of archaeal membrane lipids. The sequence is that of CDP-archaeol synthase from Pyrobaculum islandicum (strain DSM 4184 / JCM 9189 / GEO3).